Consider the following 446-residue polypeptide: UDP-N-acetylmuramoylalanine--D-glutamate ligase (446 aa).

118-124 (GSNGKST) lines the ATP pocket.

It belongs to the MurCDEF family.

It is found in the cytoplasm. It catalyses the reaction UDP-N-acetyl-alpha-D-muramoyl-L-alanine + D-glutamate + ATP = UDP-N-acetyl-alpha-D-muramoyl-L-alanyl-D-glutamate + ADP + phosphate + H(+). It functions in the pathway cell wall biogenesis; peptidoglycan biosynthesis. In terms of biological role, cell wall formation. Catalyzes the addition of glutamate to the nucleotide precursor UDP-N-acetylmuramoyl-L-alanine (UMA). This Pseudoalteromonas translucida (strain TAC 125) protein is UDP-N-acetylmuramoylalanine--D-glutamate ligase.